We begin with the raw amino-acid sequence, 694 residues long: Elongation factor G (694 aa).

Positions 9 to 288 (SKIRNIGIMA…VIVKWLPSPK (280 aa)) constitute a tr-type G domain. GTP is bound by residues 18–25 (AHIDAGKT), 82–86 (DTPGH), and 136–139 (NKMD).

This sequence belongs to the TRAFAC class translation factor GTPase superfamily. Classic translation factor GTPase family. EF-G/EF-2 subfamily.

It is found in the cytoplasm. Functionally, catalyzes the GTP-dependent ribosomal translocation step during translation elongation. During this step, the ribosome changes from the pre-translocational (PRE) to the post-translocational (POST) state as the newly formed A-site-bound peptidyl-tRNA and P-site-bound deacylated tRNA move to the P and E sites, respectively. Catalyzes the coordinated movement of the two tRNA molecules, the mRNA and conformational changes in the ribosome. In Chlamydia felis (strain Fe/C-56) (Chlamydophila felis), this protein is Elongation factor G.